A 179-amino-acid chain; its full sequence is Large ribosomal subunit protein uL6 (179 aa).

The protein belongs to the universal ribosomal protein uL6 family. As to quaternary structure, part of the 50S ribosomal subunit.

Functionally, this protein binds to the 23S rRNA, and is important in its secondary structure. It is located near the subunit interface in the base of the L7/L12 stalk, and near the tRNA binding site of the peptidyltransferase center. The chain is Large ribosomal subunit protein uL6 from Clostridium novyi (strain NT).